The following is a 39-amino-acid chain: Photosystem II reaction center protein J (39 aa).

A helical transmembrane segment spans residues 7-27; sequence IPLWIVAVVVGLGVVTVVGLF.

It belongs to the PsbJ family. PSII is composed of 1 copy each of membrane proteins PsbA, PsbB, PsbC, PsbD, PsbE, PsbF, PsbH, PsbI, PsbJ, PsbK, PsbL, PsbM, PsbT, PsbX, PsbY, PsbZ, Psb30/Ycf12, peripheral proteins PsbO, CyanoQ (PsbQ), PsbU, PsbV and a large number of cofactors. It forms dimeric complexes.

It localises to the cellular thylakoid membrane. One of the components of the core complex of photosystem II (PSII). PSII is a light-driven water:plastoquinone oxidoreductase that uses light energy to abstract electrons from H(2)O, generating O(2) and a proton gradient subsequently used for ATP formation. It consists of a core antenna complex that captures photons, and an electron transfer chain that converts photonic excitation into a charge separation. The polypeptide is Photosystem II reaction center protein J (Synechococcus sp. (strain JA-3-3Ab) (Cyanobacteria bacterium Yellowstone A-Prime)).